A 74-amino-acid chain; its full sequence is Cytochrome c oxidase subunit 6C (74 aa).

Topologically, residues 2–12 (STALAKPQMRG) are mitochondrial matrix. The helical transmembrane segment at 13 to 53 (LLARRLRFHIVGAFMVSLGFATFYKFAVAEKRKKAYADFYR) threads the bilayer. Residues 54 to 74 (NYDSMKDFEEMRKAGIFQSAK) lie on the Mitochondrial intermembrane side of the membrane.

This sequence belongs to the cytochrome c oxidase subunit 6c family. In terms of assembly, component of the cytochrome c oxidase (complex IV, CIV), a multisubunit enzyme composed of 14 subunits. The complex is composed of a catalytic core of 3 subunits MT-CO1, MT-CO2 and MT-CO3, encoded in the mitochondrial DNA, and 11 supernumerary subunits COX4I1 (or COX4I2), COX5A, COX5B, COX6A2 (or COX6A1), COX6B1 (or COX6B2), COX6C, COX7A1 (or COX7A2), COX7B, COX7C, COX8B and NDUFA4, which are encoded in the nuclear genome. The complex exists as a monomer or a dimer and forms supercomplexes (SCs) in the inner mitochondrial membrane with NADH-ubiquinone oxidoreductase (complex I, CI) and ubiquinol-cytochrome c oxidoreductase (cytochrome b-c1 complex, complex III, CIII), resulting in different assemblies (supercomplex SCI(1)III(2)IV(1) and megacomplex MCI(2)III(2)IV(2)).

Its subcellular location is the mitochondrion inner membrane. Its pathway is energy metabolism; oxidative phosphorylation. Component of the cytochrome c oxidase, the last enzyme in the mitochondrial electron transport chain which drives oxidative phosphorylation. The respiratory chain contains 3 multisubunit complexes succinate dehydrogenase (complex II, CII), ubiquinol-cytochrome c oxidoreductase (cytochrome b-c1 complex, complex III, CIII) and cytochrome c oxidase (complex IV, CIV), that cooperate to transfer electrons derived from NADH and succinate to molecular oxygen, creating an electrochemical gradient over the inner membrane that drives transmembrane transport and the ATP synthase. Cytochrome c oxidase is the component of the respiratory chain that catalyzes the reduction of oxygen to water. Electrons originating from reduced cytochrome c in the intermembrane space (IMS) are transferred via the dinuclear copper A center (CU(A)) of subunit 2 and heme A of subunit 1 to the active site in subunit 1, a binuclear center (BNC) formed by heme A3 and copper B (CU(B)). The BNC reduces molecular oxygen to 2 water molecules using 4 electrons from cytochrome c in the IMS and 4 protons from the mitochondrial matrix. This chain is Cytochrome c oxidase subunit 6C (COX6C), found in Bos taurus (Bovine).